The sequence spans 463 residues: Cysteine--tRNA ligase (463 aa).

C33 serves as a coordination point for Zn(2+). A 'HIGH' region motif is present at residues 35–45 (PTVYDFAHIGN). The Zn(2+) site is built by C221, H246, and E250. The 'KMSKS' region motif lies at 279-283 (KMSKS). K282 is an ATP binding site.

This sequence belongs to the class-I aminoacyl-tRNA synthetase family. Monomer. Requires Zn(2+) as cofactor.

It is found in the cytoplasm. The catalysed reaction is tRNA(Cys) + L-cysteine + ATP = L-cysteinyl-tRNA(Cys) + AMP + diphosphate. The polypeptide is Cysteine--tRNA ligase (Rhizobium johnstonii (strain DSM 114642 / LMG 32736 / 3841) (Rhizobium leguminosarum bv. viciae)).